The primary structure comprises 307 residues: Protein Y (307 aa).

Belongs to the ATP-dependent AMP-binding enzyme family.

It functions in the pathway antibiotic biosynthesis; candicidin biosynthesis. In terms of biological role, may be a p-aminobenzoic acid-CoA ligase that activates PabA to start the biosynthesis of candicidin. The chain is Protein Y from Streptomyces griseus.